Reading from the N-terminus, the 252-residue chain is Triosephosphate isomerase (252 aa).

9-11 serves as a coordination point for substrate; the sequence is NWK. His-100 functions as the Electrophile in the catalytic mechanism. The active-site Proton acceptor is Glu-171. Substrate is bound by residues Gly-177, Ser-216, and 237–238; that span reads GG.

It belongs to the triosephosphate isomerase family. As to quaternary structure, homodimer.

The protein resides in the cytoplasm. The enzyme catalyses D-glyceraldehyde 3-phosphate = dihydroxyacetone phosphate. The protein operates within carbohydrate biosynthesis; gluconeogenesis. Its pathway is carbohydrate degradation; glycolysis; D-glyceraldehyde 3-phosphate from glycerone phosphate: step 1/1. Its function is as follows. Involved in the gluconeogenesis. Catalyzes stereospecifically the conversion of dihydroxyacetone phosphate (DHAP) to D-glyceraldehyde-3-phosphate (G3P). The chain is Triosephosphate isomerase from Polynucleobacter necessarius subsp. necessarius (strain STIR1).